We begin with the raw amino-acid sequence, 505 residues long: Trans-cinnamate 4-monooxygenase (505 aa).

The chain crosses the membrane as a helical span at residues 3–23 (LLLVEKTLLALFAAIIASIFI). Residues 213 to 218 (RSRLAQ) and Ala-306 each bind (E)-cinnamate. Cys-447 serves as a coordination point for heme.

Belongs to the cytochrome P450 family. Heme is required as a cofactor.

It is found in the membrane. The enzyme catalyses (E)-cinnamate + reduced [NADPH--hemoprotein reductase] + O2 = (E)-4-coumarate + oxidized [NADPH--hemoprotein reductase] + H2O + H(+). It functions in the pathway phenylpropanoid metabolism; trans-4-coumarate biosynthesis; trans-4-coumarate from trans-cinnamate: step 1/1. Its function is as follows. Catalyzes the first oxidative step of the phenylpropanoid pathway in higher plants by transforming trans-cinnamate into p-coumarate. The compounds formed by this pathway are essential components for lignification, pollination, and defense against ultraviolet light, predators and pathogens. This Zinnia elegans (Garden zinnia) protein is Trans-cinnamate 4-monooxygenase (CYP73A12).